The following is a 284-amino-acid chain: D-tagatose-1,6-bisphosphate aldolase subunit GatY (284 aa).

The active-site Proton donor is the aspartate 82. Residues histidine 83 and histidine 180 each contribute to the Zn(2+) site. Glycine 181 contacts dihydroxyacetone phosphate. Histidine 208 serves as a coordination point for Zn(2+). Dihydroxyacetone phosphate is bound by residues 209 to 211 (GAS) and 230 to 233 (NVAT).

Belongs to the class II fructose-bisphosphate aldolase family. TagBP aldolase GatY subfamily. As to quaternary structure, forms a complex with GatZ. The cofactor is Zn(2+).

It carries out the reaction D-tagatofuranose 1,6-bisphosphate = D-glyceraldehyde 3-phosphate + dihydroxyacetone phosphate. It participates in carbohydrate metabolism; D-tagatose 6-phosphate degradation; D-glyceraldehyde 3-phosphate and glycerone phosphate from D-tagatose 6-phosphate: step 2/2. Its function is as follows. Catalytic subunit of the tagatose-1,6-bisphosphate aldolase GatYZ, which catalyzes the reversible aldol condensation of dihydroxyacetone phosphate (DHAP or glycerone-phosphate) with glyceraldehyde 3-phosphate (G3P) to produce tagatose 1,6-bisphosphate (TBP). Requires GatZ subunit for full activity and stability. Is involved in the catabolism of galactitol. The protein is D-tagatose-1,6-bisphosphate aldolase subunit GatY of Escherichia coli O6:K15:H31 (strain 536 / UPEC).